A 191-amino-acid chain; its full sequence is Orotate phosphoribosyltransferase (191 aa).

114 to 122 (EDVVTTGKS) lines the 5-phospho-alpha-D-ribose 1-diphosphate pocket. Orotate is bound by residues Thr-118 and Arg-146.

Belongs to the purine/pyrimidine phosphoribosyltransferase family. PyrE subfamily. As to quaternary structure, homodimer. Mg(2+) serves as cofactor.

It catalyses the reaction orotidine 5'-phosphate + diphosphate = orotate + 5-phospho-alpha-D-ribose 1-diphosphate. The protein operates within pyrimidine metabolism; UMP biosynthesis via de novo pathway; UMP from orotate: step 1/2. Functionally, catalyzes the transfer of a ribosyl phosphate group from 5-phosphoribose 1-diphosphate to orotate, leading to the formation of orotidine monophosphate (OMP). The sequence is that of Orotate phosphoribosyltransferase from Clostridium botulinum (strain ATCC 19397 / Type A).